The sequence spans 326 residues: NADH-ubiquinone oxidoreductase chain 1 (326 aa).

The next 9 membrane-spanning stretches (helical) occupy residues methionine 1–valine 21, proline 41–valine 61, isoleucine 72–valine 92, isoleucine 104–threonine 124, isoleucine 152–valine 172, serine 177–alanine 197, tyrosine 234–phenylalanine 256, valine 268–phenylalanine 288, and isoleucine 303–asparagine 323.

Belongs to the complex I subunit 1 family.

It is found in the mitochondrion inner membrane. It carries out the reaction a ubiquinone + NADH + 5 H(+)(in) = a ubiquinol + NAD(+) + 4 H(+)(out). Functionally, core subunit of the mitochondrial membrane respiratory chain NADH dehydrogenase (Complex I) that is believed to belong to the minimal assembly required for catalysis. Complex I functions in the transfer of electrons from NADH to the respiratory chain. The immediate electron acceptor for the enzyme is believed to be ubiquinone. In Chondrus crispus (Carrageen Irish moss), this protein is NADH-ubiquinone oxidoreductase chain 1 (ND1).